We begin with the raw amino-acid sequence, 579 residues long: Probable methyl-accepting chemotaxis protein BT9727_0355 (579 aa).

At 1–13 (MKKYWHKLSFLQK) the chain is on the cytoplasmic side. A helical membrane pass occupies residues 14–34 (NVLLTVLVILTLVGTMGALSF). Topologically, residues 35–198 (NMFQNSMMSI…ASIVPSTKEK (164 aa)) are extracellular. The helical transmembrane segment at 199-219 (FIIQGLMFICISVLIATVIQF) threads the bilayer. At 220–579 (LIVRNALAPL…LQELIGEFKS (360 aa)) the chain is on the cytoplasmic side. The HAMP domain maps to 223–274 (RNALAPLRDLREGLRRVGEGDLNIKLEERSDDIGIINSYFNNTIEKFKGIID). Glu289 is modified (glutamate methyl ester (Glu)). The Methyl-accepting transducer domain maps to 293-529 (STKENSMAVQ…NIVRVVNELS (237 aa)). The residue at position 548 (Glu548) is a Glutamate methyl ester (Glu).

The protein belongs to the methyl-accepting chemotaxis (MCP) protein family.

It is found in the cell membrane. In terms of biological role, chemotactic-signal transducers respond to changes in the concentration of attractants and repellents in the environment, transduce a signal from the outside to the inside of the cell, and facilitate sensory adaptation through the variation of the level of methylation. The polypeptide is Probable methyl-accepting chemotaxis protein BT9727_0355 (Bacillus thuringiensis subsp. konkukian (strain 97-27)).